The sequence spans 1758 residues: Y' element ATP-dependent helicase YJL225C (1758 aa).

A Helicase ATP-binding domain is found at 668–845 (EIYMADTPSV…LQRIGLTGLA (178 aa)). ATP is bound at residue 681-688 (APPGYGKT). Positions 900 to 1051 (ALKLLLALFE…EFYGLESKKG (152 aa)) constitute a Helicase C-terminal domain. Over residues 1142-1360 (NVRTNATTNA…ATTTESTNAS (219 aa)) the composition is skewed to low complexity. The interval 1142-1384 (NVRTNATTNA…RFHPVTDINK (243 aa)) is disordered. The span at 1361–1384 (AKEDANKDGNAEDNRFHPVTDINK) shows a compositional bias: basic and acidic residues.

It belongs to the helicase family. Yeast subtelomeric Y' repeat subfamily.

In terms of biological role, catalyzes DNA unwinding and is involved in telomerase-independent telomere maintenance. This is Y' element ATP-dependent helicase YJL225C from Saccharomyces cerevisiae (strain ATCC 204508 / S288c) (Baker's yeast).